The primary structure comprises 600 residues: Chaperonin 60 subunit beta 1, chloroplastic (600 aa).

A compositionally biased stretch (polar residues) spans 1–12; sequence MASTFTATSSIG. Residues 1–23 are disordered; that stretch reads MASTFTATSSIGSMVAPNGHKSD. The N-terminal 54 residues, 1–54, are a transit peptide targeting the chloroplast; it reads MASTFTATSSIGSMVAPNGHKSDKKLISKLSSSSFGRRQSVCPRPRRSSSAIVC. Phosphoserine is present on residues Ser101 and Ser478.

This sequence belongs to the chaperonin (HSP60) family. As to quaternary structure, part of the Cpn60 complex composed of 7 alpha and 7 beta subunits. Can also form a complex composed of 14 beta subunits only. Both complexes show ATPase activity. The Cpn60 complex interacts with the Cpn10 complex. Interacts with RAB during heat stress. In terms of tissue distribution, expressed in leaves, stems, petioles and flowers.

The protein resides in the plastid. The protein localises to the chloroplast stroma. Its function is as follows. Binds RuBisCO small and large subunits and is implicated in the assembly of the enzyme oligomer. Involved in protein assisted folding. Required for proper plastid division. In Arabidopsis thaliana (Mouse-ear cress), this protein is Chaperonin 60 subunit beta 1, chloroplastic (CPN60B1).